Reading from the N-terminus, the 163-residue chain is MGKSARLRRSQTSSPENVLLGKDSSDDPYRSDSETESNSSSGTESNMSSDSTTSAGVSAMIRVLSDSLLRTELAEMEMIKAREAARLEAEKRRLEMEVDLTQMVLQTHLQAMSSLPVGEHKIYQAQRKRKRSDVEELESSTREKSIALLGLLQLNLIFWNSLT.

A disordered region spans residues 1-54 (MGKSARLRRSQTSSPENVLLGKDSSDDPYRSDSETESNSSSGTESNMSSDSTTS). Basic and acidic residues predominate over residues 23–33 (DSSDDPYRSDS). Positions 36-52 (ESNSSSGTESNMSSDST) are enriched in low complexity. A coiled-coil region spans residues 69–143 (LRTELAEMEM…VEELESSTRE (75 aa)).

This is an uncharacterized protein from Arabidopsis thaliana (Mouse-ear cress).